A 396-amino-acid polypeptide reads, in one-letter code: Phosphoglycerate kinase (396 aa).

Substrate contacts are provided by residues 21–23 (DFN), Arg-36, 59–62 (HLGR), Arg-118, and Arg-151. Residues Lys-201, Gly-292, Glu-323, and 349–352 (GGDS) each bind ATP.

Belongs to the phosphoglycerate kinase family. In terms of assembly, monomer.

It localises to the cytoplasm. It catalyses the reaction (2R)-3-phosphoglycerate + ATP = (2R)-3-phospho-glyceroyl phosphate + ADP. Its pathway is carbohydrate degradation; glycolysis; pyruvate from D-glyceraldehyde 3-phosphate: step 2/5. The polypeptide is Phosphoglycerate kinase (Leptospira interrogans serogroup Icterohaemorrhagiae serovar Lai (strain 56601)).